The sequence spans 227 residues: UPF0758 protein lpl2409 (227 aa).

One can recognise an MPN domain in the interval 102–225 (RLSNTQQTYA…YSIFAENKWA (124 aa)). H173, H175, and D186 together coordinate Zn(2+). The JAMM motif signature appears at 173–186 (HNHPSGLSDASQQD).

The protein belongs to the UPF0758 family.

This is UPF0758 protein lpl2409 from Legionella pneumophila (strain Lens).